A 138-amino-acid chain; its full sequence is Large ribosomal subunit protein uL16c (138 aa).

Belongs to the universal ribosomal protein uL16 family. In terms of assembly, part of the 50S ribosomal subunit.

Its subcellular location is the plastid. The protein localises to the chloroplast. The protein is Large ribosomal subunit protein uL16c of Chaetosphaeridium globosum (Charophycean green alga).